Here is a 906-residue protein sequence, read N- to C-terminus: Protein translocase subunit SecA (906 aa).

ATP contacts are provided by residues Gln90, 108–112 (GEGKT), and Asp503. The tract at residues 845–882 (TAAEAPASVPQPQAAVAPQPAPELVGADNGESQPQAWG) is disordered. A compositionally biased stretch (low complexity) spans 846–862 (AAEAPASVPQPQAAVAP). Zn(2+) contacts are provided by Cys890, Cys892, Cys901, and His902.

This sequence belongs to the SecA family. Monomer and homodimer. Part of the essential Sec protein translocation apparatus which comprises SecA, SecYEG and auxiliary proteins SecDF-YajC and YidC. Zn(2+) serves as cofactor.

It localises to the cell inner membrane. The protein resides in the cytoplasm. The catalysed reaction is ATP + H2O + cellular proteinSide 1 = ADP + phosphate + cellular proteinSide 2.. Part of the Sec protein translocase complex. Interacts with the SecYEG preprotein conducting channel. Has a central role in coupling the hydrolysis of ATP to the transfer of proteins into and across the cell membrane, serving both as a receptor for the preprotein-SecB complex and as an ATP-driven molecular motor driving the stepwise translocation of polypeptide chains across the membrane. The chain is Protein translocase subunit SecA from Cereibacter sphaeroides (strain ATCC 17025 / ATH 2.4.3) (Rhodobacter sphaeroides).